The primary structure comprises 407 residues: MTRTSPRHHAPSETKRRVPMGGVHTNPGKKLTITAVAFQFFINGLVLAAWATSIPHVKNAYSFNDAELGVLLLIMAAGALLFMSLAGYFSHVFGSRRMSIQSALLFPSALVLIFAAPNCMTFLCSIVLFGAANGAMDVLMNHQAKALEENGFPRIMAFLHGCSSTGILAGIMTFGVIGDGHYVARSVTLLTGILIVARWLFPHLLDDVRSGEHRLAIGELRNCKLLMFGILSFLTMVTDGAIAEWSKLYLIRVEQVTDQVGSLGYVAFTLLMIAGRISGDRVKDAIGCRALIAISGSLASAGMTTALFMPSFAGKLAGFALLGLGMANLVPIIFSEAASMNTVSKTVGLTFVSVCGYSGFLVGPPIIGRIAEAVGLGRALLFIIAVGVIVACASVFFDRHRSGQPEP.

The segment at 1–24 (MTRTSPRHHAPSETKRRVPMGGVH) is disordered. The next 11 helical transmembrane spans lie at 31-51 (LTIT…AAWA), 69-89 (GVLL…AGYF), 109-129 (ALVL…IVLF), 157-177 (AFLH…FGVI), 186-206 (SVTL…HLLD), 225-245 (LLMF…IAEW), 255-275 (QVTD…MIAG), 290-310 (ALIA…LFMP), 316-336 (LAGF…IFSE), 347-367 (VGLT…PPII), and 377-397 (GRAL…SVFF).

The protein localises to the cell membrane. Functionally, may be a membrane transport protein that could either transport a precursor for rhizopine biosynthesis into bacteroids or the finished product from the bacteroids. The chain is Membrane protein MosC (mosC) from Rhizobium meliloti (Ensifer meliloti).